The sequence spans 421 residues: ATP-dependent RNA helicase RhlB (421 aa).

Positions 9–37 match the Q motif motif; sequence QKFSDFALHPQVVEALEKKGFYNCTPIQA. Residues 40-219 form the Helicase ATP-binding domain; that stretch reads LPLTLAGRDV…FEQMNNAEYV (180 aa). 53 to 60 contacts ATP; the sequence is AQTGTGKT. A DEAD box motif is present at residues 165 to 168; it reads DEAD. A Helicase C-terminal domain is found at 245 to 390; sequence RLLQTLIEEE…VSKYNPEALM (146 aa). The interval 396-421 is disordered; that stretch reads PLRLTRSRPGNGPRRAGAPRNRRRSG. The segment covering 402–414 has biased composition (low complexity); sequence SRPGNGPRRAGAP.

This sequence belongs to the DEAD box helicase family. RhlB subfamily. In terms of assembly, component of the RNA degradosome, which is a multiprotein complex involved in RNA processing and mRNA degradation.

It is found in the cytoplasm. The enzyme catalyses ATP + H2O = ADP + phosphate + H(+). In terms of biological role, DEAD-box RNA helicase involved in RNA degradation. Has RNA-dependent ATPase activity and unwinds double-stranded RNA. This Salmonella paratyphi A (strain AKU_12601) protein is ATP-dependent RNA helicase RhlB.